Reading from the N-terminus, the 428-residue chain is Probable RNase MJ4 (428 aa).

Zn(2+)-binding residues include H57, H59, D61, H62, H143, D165, and H397.

It belongs to the metallo-beta-lactamase superfamily. RNA-metabolizing metallo-beta-lactamase-like family. Zn(2+) is required as a cofactor.

In terms of biological role, probably an RNase. This is Probable RNase MJ4 from Methanocaldococcus jannaschii (strain ATCC 43067 / DSM 2661 / JAL-1 / JCM 10045 / NBRC 100440) (Methanococcus jannaschii).